A 364-amino-acid chain; its full sequence is Autophagy-related protein 14 (364 aa).

The segment at cysteine 5–cysteine 20 is cysteine repeats. Residues leucine 38–arginine 114 are a coiled coil.

This sequence belongs to the ATG14 family. In terms of assembly, component of the autophagy-specific VPS34 PI3-kinase complex I composed of VPS15, VPS30, VPS34, ATG14 and ATG38. Interacts directly with ATG38.

The protein localises to the preautophagosomal structure membrane. It is found in the vacuole membrane. Required for cytoplasm to vacuole transport (Cvt) and autophagy as a part of the autophagy-specific VPS34 PI3-kinase complex I. This complex is essential to recruit the ATG8-phosphatidylinositol conjugate and the ATG12-ATG5 conjugate to the pre-autophagosomal structure. ATG14 mediates the specific binding of the VPS34 PI3-kinase complex I to the preautophagosomal structure (PAS). Required for survival and/or proliferation in kidneys and in brain. This Candida glabrata (strain ATCC 2001 / BCRC 20586 / JCM 3761 / NBRC 0622 / NRRL Y-65 / CBS 138) (Yeast) protein is Autophagy-related protein 14.